Here is a 272-residue protein sequence, read N- to C-terminus: Putative phosphoenolpyruvate synthase regulatory protein (272 aa).

152–159 is an ADP binding site; sequence GVSRSGKT.

Belongs to the pyruvate, phosphate/water dikinase regulatory protein family. PSRP subfamily.

It carries out the reaction [pyruvate, water dikinase] + ADP = [pyruvate, water dikinase]-phosphate + AMP + H(+). The enzyme catalyses [pyruvate, water dikinase]-phosphate + phosphate + H(+) = [pyruvate, water dikinase] + diphosphate. In terms of biological role, bifunctional serine/threonine kinase and phosphorylase involved in the regulation of the phosphoenolpyruvate synthase (PEPS) by catalyzing its phosphorylation/dephosphorylation. This chain is Putative phosphoenolpyruvate synthase regulatory protein, found in Hahella chejuensis (strain KCTC 2396).